The following is a 507-amino-acid chain: FAD-linked oxidoreductase OXR1 (507 aa).

An N-terminal signal peptide occupies residues 1-21 (MTIKFASLILAGLGLGSGALG). 2 N-linked (GlcNAc...) asparagine glycosylation sites follow: Asn-34 and Asn-65. The 173-residue stretch at 73-245 (YAPPTFKVSV…VSATYKLKPL (173 aa)) folds into the FAD-binding PCMH-type domain. Asn-263 and Asn-288 each carry an N-linked (GlcNAc...) asparagine glycan.

Belongs to the oxygen-dependent FAD-linked oxidoreductase family. Requires FAD as cofactor.

The catalysed reaction is dihydropyriculol + A = pyriculol + AH2. It catalyses the reaction dihydropyriculariol + A = pyriculariol + AH2. It participates in polyketide biosynthesis. Functionally, FAD-linked oxidoreductase; part of the gene cluster that mediates the biosynthesis of pyriculol and pyriculariol, two heptaketides that induce lesion formation upon application on rice leaves but are dispensable for pathogenicity. The highly reducing polyketide synthase synthesizes the heptaketide backbone of pyriculol and pyriculariol. Pyriculol and pyriculariol contain several hydroxyl moieties and double bonds, so it can be assumed that several reduction steps occur during biosynthesis. These reactions could be executed by PKS19 itself or partly by the tailoring enzymes OXR1, OXR2, RED1, RED2 or RED3, identified within the cluster. The FAD-linked oxidoreductase OXR1 is the only tailoring enzyme for which the function has been determined yet, and is involved in the oxidation of dihydropyriculol and dihydropyriculariol into pyriculol and pyriculariol, respectively. This Pyricularia oryzae (strain 70-15 / ATCC MYA-4617 / FGSC 8958) (Rice blast fungus) protein is FAD-linked oxidoreductase OXR1.